Consider the following 177-residue polypeptide: ATP synthase subunit delta (177 aa).

It belongs to the ATPase delta chain family. As to quaternary structure, F-type ATPases have 2 components, F(1) - the catalytic core - and F(0) - the membrane proton channel. F(1) has five subunits: alpha(3), beta(3), gamma(1), delta(1), epsilon(1). F(0) has three main subunits: a(1), b(2) and c(10-14). The alpha and beta chains form an alternating ring which encloses part of the gamma chain. F(1) is attached to F(0) by a central stalk formed by the gamma and epsilon chains, while a peripheral stalk is formed by the delta and b chains.

It is found in the cell inner membrane. F(1)F(0) ATP synthase produces ATP from ADP in the presence of a proton or sodium gradient. F-type ATPases consist of two structural domains, F(1) containing the extramembraneous catalytic core and F(0) containing the membrane proton channel, linked together by a central stalk and a peripheral stalk. During catalysis, ATP synthesis in the catalytic domain of F(1) is coupled via a rotary mechanism of the central stalk subunits to proton translocation. Its function is as follows. This protein is part of the stalk that links CF(0) to CF(1). It either transmits conformational changes from CF(0) to CF(1) or is implicated in proton conduction. This is ATP synthase subunit delta from Shewanella halifaxensis (strain HAW-EB4).